The sequence spans 338 residues: MKLGRYLAVSKDLAPAKFIIAKCIEVEEFKGLELNELWEIHNKVLKKVDFDNFDFNDLEYVKPNLLDLKVEIAKNIFKNCHFCEHRCYVNRETERGFCRIKESYYSTEFLHLGEERVLVPSHTIFFCGCNFKCVFCQNWDISQVYFDKTIPNHCIPYNPKEMAKIIKHKRDYSKNVNFVGGDPTPHLLSILKTLSYLDKNIPVVWNSNMYLTVEGMHLLKGVVDVYLTDFKFGNNECGERLSKVKNYFDIIKRNHLLIKDEEVIIRHLVMPNHLDCCTEKIFDFISKNLDNAVVNVMFQYRPEYKAKEYPDINRRLTYEEIEKALELAEKYNLDLIYD.

Residues 111-334 enclose the Radical SAM core domain; that stretch reads HLGEERVLVP…LELAEKYNLD (224 aa). Cysteine 129, cysteine 133, and cysteine 136 together coordinate [4Fe-4S] cluster.

[4Fe-4S] cluster is required as a cofactor.

This is an uncharacterized protein from Methanocaldococcus jannaschii (strain ATCC 43067 / DSM 2661 / JAL-1 / JCM 10045 / NBRC 100440) (Methanococcus jannaschii).